Here is a 311-residue protein sequence, read N- to C-terminus: Methionyl-tRNA formyltransferase (311 aa).

Position 114–117 (114–117 (SLLP)) interacts with (6S)-5,6,7,8-tetrahydrofolate.

The protein belongs to the Fmt family.

It catalyses the reaction L-methionyl-tRNA(fMet) + (6R)-10-formyltetrahydrofolate = N-formyl-L-methionyl-tRNA(fMet) + (6S)-5,6,7,8-tetrahydrofolate + H(+). Attaches a formyl group to the free amino group of methionyl-tRNA(fMet). The formyl group appears to play a dual role in the initiator identity of N-formylmethionyl-tRNA by promoting its recognition by IF2 and preventing the misappropriation of this tRNA by the elongation apparatus. In Corynebacterium diphtheriae (strain ATCC 700971 / NCTC 13129 / Biotype gravis), this protein is Methionyl-tRNA formyltransferase.